The chain runs to 555 residues: Spermine oxidase (555 aa).

FAD is bound by residues Ala35, Glu55, Arg63, 79–80 (TW), and Val261. Positions 271 to 307 (AHPRGPEIEPRGEGDHNHDTGEGGQSGENPQQGRWDE) are disordered. A compositionally biased stretch (basic and acidic residues) spans 274 to 291 (RGPEIEPRGEGDHNHDTG). FAD-binding positions include Glu519 and 528–529 (TT).

This sequence belongs to the flavin monoamine oxidase family. It depends on FAD as a cofactor. Widely expressed. Isoform 1 and isoform 2 are expressed at higher level in brain and skeletal muscle. Isoform 7 is found in brain and spleen, isoform 10 is widely expressed but found at lower level in heart, kidney, liver and lung.

The protein localises to the cytoplasm. It localises to the nucleus. It catalyses the reaction spermine + O2 + H2O = 3-aminopropanal + spermidine + H2O2. It functions in the pathway amine and polyamine degradation; spermine degradation. Functionally, flavoenzyme which catalyzes the oxidation of spermine to spermidine. Can also use N(1)-acetylspermine and spermidine as substrates, with different affinity depending on the isoform (isozyme) and on the experimental conditions. Plays an important role in the regulation of polyamine intracellular concentration and has the potential to act as a determinant of cellular sensitivity to the antitumor polyamine analogs. May contribute to beta-alanine production via aldehyde dehydrogenase conversion of 3-amino-propanal. This is Spermine oxidase (Smox) from Mus musculus (Mouse).